We begin with the raw amino-acid sequence, 479 residues long: Ubiquinone biosynthesis monooxygenase COQ6, mitochondrial (479 aa).

The N-terminal 17 residues, 1-17 (MFFSKVMLTRRILVRGL), are a transit peptide targeting the mitochondrion.

It belongs to the UbiH/COQ6 family. Component of a multi-subunit COQ enzyme complex, composed of at least COQ3, COQ4, COQ5, COQ6, COQ7 and COQ9. Requires FAD as cofactor.

It is found in the mitochondrion inner membrane. The enzyme catalyses 4-hydroxy-3-(all-trans-hexaprenyl)benzoate + 2 reduced [2Fe-2S]-[ferredoxin] + O2 + 2 H(+) = 3,4-dihydroxy-5-(all-trans-hexaprenyl)benzoate + 2 oxidized [2Fe-2S]-[ferredoxin] + H2O. It carries out the reaction 2-methoxy-6-(all-trans-hexaprenyl)phenol + 2 reduced [2Fe-2S]-[ferredoxin] + O2 + 2 H(+) = 2-methoxy-6-(all-trans-hexaprenyl)benzene-1,4-diol + 2 oxidized [2Fe-2S]-[ferredoxin] + H2O. The catalysed reaction is 4-amino-3-(all-trans-hexaprenyl)benzoate + 2 reduced [2Fe-2S]-[ferredoxin] + O2 + 2 H(+) = 4-amino-5-hydroxy-3-(all-trans-hexaprenyl)benzoate + 2 oxidized [2Fe-2S]-[ferredoxin] + H2O. It catalyses the reaction 4-amino-5-hydroxy-3-(all-trans-hexaprenyl)benzoate + 4 reduced [2Fe-2S]-[ferredoxin] + O2 + 5 H(+) = 3,4-dihydroxy-5-(all-trans-hexaprenyl)benzoate + 4 oxidized [2Fe-2S]-[ferredoxin] + NH4(+) + H2O. It functions in the pathway cofactor biosynthesis; ubiquinone biosynthesis. Functionally, FAD-dependent monooxygenase required for two non-consecutive steps during ubiquinone biosynthesis. Required for the C5-ring hydroxylation during ubiquinone biosynthesis by catalyzing the hydroxylation of 4-hydroxy-3-(all-trans-hexaprenyl)benzoic acid to 3,4-dihydroxy-5-(all-trans-hexaprenyl)benzoic acid. Also acts downstream of COQ4, for the C1-hydroxylation during ubiquinone biosynthesis by catalyzing the hydroxylation of 2-methoxy-6-(all-trans-hexaprenyl)phenol to 2-methoxy-6-(all-trans-hexaprenyl)benzene-1,4-diol. The electrons required for the hydroxylation reaction are funneled indirectly from NADPH via ferredoxin (YAH1) and ferredoxin reductase (ARH1) to COQ6. Can also convert 3-hexaprenyl-4-aminobenzoic acid (HAB), a COQ2-prenylated pABA, to DHHB in a two step process. HAB is first hydroxylated at C5 to yield 3-hexaprenyl-4-amino-5-hydroxybenzoic acid (HHAB) which is further deaminated at C4 by COQ6 to produce DHHB. The chain is Ubiquinone biosynthesis monooxygenase COQ6, mitochondrial from Saccharomyces cerevisiae (strain ATCC 204508 / S288c) (Baker's yeast).